The sequence spans 211 residues: Protein GrpE (211 aa).

The interval 1 to 43 is disordered; the sequence is MTDETTKNGPDATAADAAADAAANVEIDNSVQEEAKQPDPLEL. Residues 11-23 are compositionally biased toward low complexity; it reads DATAADAAADAAA. Positions 33 to 43 are enriched in basic and acidic residues; that stretch reads EEAKQPDPLEL.

The protein belongs to the GrpE family. As to quaternary structure, homodimer.

It localises to the cytoplasm. Functionally, participates actively in the response to hyperosmotic and heat shock by preventing the aggregation of stress-denatured proteins, in association with DnaK and GrpE. It is the nucleotide exchange factor for DnaK and may function as a thermosensor. Unfolded proteins bind initially to DnaJ; upon interaction with the DnaJ-bound protein, DnaK hydrolyzes its bound ATP, resulting in the formation of a stable complex. GrpE releases ADP from DnaK; ATP binding to DnaK triggers the release of the substrate protein, thus completing the reaction cycle. Several rounds of ATP-dependent interactions between DnaJ, DnaK and GrpE are required for fully efficient folding. The chain is Protein GrpE from Rhizobium etli (strain ATCC 51251 / DSM 11541 / JCM 21823 / NBRC 15573 / CFN 42).